The following is a 72-amino-acid chain: Protein SlyX (72 aa).

The disordered stretch occupies residues 53 to 72; the sequence is KSSQSSMLARPEDETPPPHY.

It belongs to the SlyX family.

This Proteus mirabilis (strain HI4320) protein is Protein SlyX.